Reading from the N-terminus, the 123-residue chain is Double-stranded DNA deaminase immunity protein (123 aa).

The toxic domain forms a 1:1 complex with the DddI immunity protein. This protein blocks the active site of the toxin.

Functionally, immunity protein component of a toxin-immunity protein module, which functions as a cellular contact-dependent growth inhibition (CDI) system. CDI modules allow bacteria to communicate with and inhibit the growth of closely related neighboring bacteria in a contact-dependent fashion. Bacteria that have this module inhibit or kill bacteria without it, giving them a growth advantage. Specifically inhibits the toxic activity of cognate toxin DddA (C-terminal 163 residue fragment) upon expression in E.coli. In Burkholderia cenocepacia (strain H111), this protein is Double-stranded DNA deaminase immunity protein.